A 639-amino-acid chain; its full sequence is DNA primase (639 aa).

Residues 41 to 65 (CPFHNEKSPSFHVRPNHGHFHCFGC) form a CHC2-type zinc finger. A Toprim domain is found at 262-348 (HQAVVVEGYT…AGQSFVAVAP (87 aa)). Glutamate 268, aspartate 319, and aspartate 321 together coordinate Mg(2+). Residues 460 to 479 (RAAQRPTAGPPTELAVRPDP) form a disordered region.

This sequence belongs to the DnaG primase family. As to quaternary structure, monomer. Interacts with DnaB. It depends on Zn(2+) as a cofactor. Mg(2+) is required as a cofactor.

The catalysed reaction is ssDNA + n NTP = ssDNA/pppN(pN)n-1 hybrid + (n-1) diphosphate.. In terms of biological role, RNA polymerase that catalyzes the synthesis of short RNA molecules used as primers for DNA polymerase during DNA replication. This Mycobacterium bovis (strain ATCC BAA-935 / AF2122/97) protein is DNA primase.